The sequence spans 239 residues: Ribosomal RNA small subunit methyltransferase G (239 aa).

S-adenosyl-L-methionine is bound by residues Gly78, Phe83, 129-130 (AE), and Arg148.

It belongs to the methyltransferase superfamily. RNA methyltransferase RsmG family.

The protein localises to the cytoplasm. Its function is as follows. Specifically methylates the N7 position of a guanine in 16S rRNA. The chain is Ribosomal RNA small subunit methyltransferase G from Clostridium beijerinckii (strain ATCC 51743 / NCIMB 8052) (Clostridium acetobutylicum).